The primary structure comprises 284 residues: D-tagatose-1,6-bisphosphate aldolase subunit GatY (284 aa).

The active-site Proton donor is aspartate 82. 2 residues coordinate Zn(2+): histidine 83 and histidine 180. Dihydroxyacetone phosphate is bound at residue glycine 181. Histidine 208 lines the Zn(2+) pocket. Dihydroxyacetone phosphate contacts are provided by residues 209–211 and 230–233; these read GAS and NVAT.

Belongs to the class II fructose-bisphosphate aldolase family. TagBP aldolase GatY subfamily. In terms of assembly, forms a complex with GatZ. Requires Zn(2+) as cofactor.

It carries out the reaction D-tagatofuranose 1,6-bisphosphate = D-glyceraldehyde 3-phosphate + dihydroxyacetone phosphate. It participates in carbohydrate metabolism; D-tagatose 6-phosphate degradation; D-glyceraldehyde 3-phosphate and glycerone phosphate from D-tagatose 6-phosphate: step 2/2. Catalytic subunit of the tagatose-1,6-bisphosphate aldolase GatYZ, which catalyzes the reversible aldol condensation of dihydroxyacetone phosphate (DHAP or glycerone-phosphate) with glyceraldehyde 3-phosphate (G3P) to produce tagatose 1,6-bisphosphate (TBP). Requires GatZ subunit for full activity and stability. Is involved in the catabolism of galactitol. This Escherichia coli (strain SMS-3-5 / SECEC) protein is D-tagatose-1,6-bisphosphate aldolase subunit GatY.